Reading from the N-terminus, the 554-residue chain is 3-(3-hydroxy-phenyl)propionate/3-hydroxycinnamic acid hydroxylase (554 aa).

FAD contacts are provided by residues 17 to 46 and 285 to 295; these read QVAI…VVEK and FRINRVLLAGD.

It belongs to the PheA/TfdB FAD monooxygenase family. The cofactor is FAD.

It carries out the reaction 3-(3-hydroxyphenyl)propanoate + NADH + O2 + H(+) = 3-(2,3-dihydroxyphenyl)propanoate + NAD(+) + H2O. The enzyme catalyses (2E)-3-(3-hydroxyphenyl)prop-2-enoate + NADH + O2 + H(+) = (2E)-3-(2,3-dihydroxyphenyl)prop-2-enoate + NAD(+) + H2O. Its pathway is aromatic compound metabolism; 3-phenylpropanoate degradation. Its function is as follows. Catalyzes the insertion of one atom of molecular oxygen into position 2 of the phenyl ring of 3-(3-hydroxyphenyl)propionate (3-HPP) and hydroxycinnamic acid (3HCI). The chain is 3-(3-hydroxy-phenyl)propionate/3-hydroxycinnamic acid hydroxylase from Klebsiella pneumoniae subsp. pneumoniae (strain ATCC 700721 / MGH 78578).